Reading from the N-terminus, the 106-residue chain is uncharacterized protein (106 aa).

The first 27 residues, 1–27 (MHHFVPSISLFMASVSFSVFFSHLATS), serve as a signal peptide directing secretion. The chain crosses the membrane as a helical span at residues 42 to 62 (TLFSMVPLINSSFNLSVFLFF).

The protein localises to the membrane. This is an uncharacterized protein from Saccharomyces cerevisiae (strain ATCC 204508 / S288c) (Baker's yeast).